The sequence spans 293 residues: MAAITASMVAELRAKTDAPMMECKKALTEADGDLAKAEELLRVKLGNKASKAASRVTAEGVVASFVGGNAGALVELNCETDFVAKNDDFLAFSKTVAELVATQNPADVAALSALPLEGSTVDAVRLALIGKIGENVSIRRFVRFETANKIATYLHGARIGVIVEYTGAEEQVGKDVAMHIAAMKPVALSSADVPAELIDTERRVAEQKAAESGKPAEIVAKMVDGSVQKYLKEVSLLNQTFVKNDKQTIEQMLKAANATVQKFALFVVGEGIEKRQDDFAAEVAAQVAAAKQQ.

An involved in Mg(2+) ion dislocation from EF-Tu region spans residues 80–83 (TDFV).

The protein belongs to the EF-Ts family.

It is found in the cytoplasm. Functionally, associates with the EF-Tu.GDP complex and induces the exchange of GDP to GTP. It remains bound to the aminoacyl-tRNA.EF-Tu.GTP complex up to the GTP hydrolysis stage on the ribosome. The sequence is that of Elongation factor Ts from Burkholderia cenocepacia (strain HI2424).